The chain runs to 176 residues: Ribosome maturation factor RimM (176 aa).

Positions proline 100–leucine 173 constitute a PRC barrel domain.

The protein belongs to the RimM family. As to quaternary structure, binds ribosomal protein uS19.

Its subcellular location is the cytoplasm. Functionally, an accessory protein needed during the final step in the assembly of 30S ribosomal subunit, possibly for assembly of the head region. Essential for efficient processing of 16S rRNA. May be needed both before and after RbfA during the maturation of 16S rRNA. It has affinity for free ribosomal 30S subunits but not for 70S ribosomes. This is Ribosome maturation factor RimM from Prochlorococcus marinus (strain SARG / CCMP1375 / SS120).